A 536-amino-acid chain; its full sequence is Arylsulfatase K (536 aa).

The signal sequence occupies residues 1–24; it reads MIQKCIALSLFLFSALPEDNIVRA. Asp-42 and Cys-82 together coordinate Ca(2+). Cys-82 functions as the Nucleophile in the catalytic mechanism. Cys-82 carries the post-translational modification 3-oxoalanine (Cys). Lys-130 is a binding site for substrate. Asn-195 carries an N-linked (GlcNAc...) asparagine glycan. Residue His-253 coordinates substrate. Residue Asn-264 is glycosylated (N-linked (GlcNAc...) asparagine). Ca(2+) contacts are provided by Asp-315 and His-316. 3 N-linked (GlcNAc...) asparagine glycosylation sites follow: Asn-377, Asn-416, and Asn-501.

It belongs to the sulfatase family. Ca(2+) serves as cofactor. Post-translationally, the conversion to 3-oxoalanine (also known as C-formylglycine, FGly), of a serine or cysteine residue in prokaryotes and of a cysteine residue in eukaryotes, is critical for catalytic activity.

Its subcellular location is the secreted. The protein localises to the lysosome. It catalyses the reaction an aryl sulfate + H2O = a phenol + sulfate + H(+). The enzyme catalyses Hydrolysis of the 2-sulfate groups of the 2-O-sulfo-D-glucuronate residues of chondroitin sulfate, heparin and heparitin sulfate.. Functionally, catalyzes the hydrolysis of pseudosubstrates such as p-nitrocatechol sulfate and p-nitrophenyl sulfate. Catalyzes the hydrolysis of the 2-sulfate groups of the 2-O-sulfo-D-glucuronate residues of chondroitin sulfate, heparin and heparitin sulfate. Acts selectively on 2-sulfoglucuronate and lacks activity against 2-sulfoiduronate. This Xenopus laevis (African clawed frog) protein is Arylsulfatase K (arsk).